The primary structure comprises 676 residues: RNA helicase NPH-II (676 aa).

Positions 172 to 347 (FSAWISHRPV…VFLPNPAFIH (176 aa)) constitute a Helicase ATP-binding domain. 185–192 (GGTGVGKT) provides a ligand contact to ATP. The DEXH box signature appears at 296-299 (DEVH). The 170-residue stretch at 366–535 (NPSSRMAYIE…NYILYANKFN (170 aa)) folds into the Helicase C-terminal domain.

Belongs to the DEAD box helicase family. DEAH subfamily. In terms of assembly, monomer.

Its subcellular location is the virion. It catalyses the reaction ATP + H2O = ADP + phosphate + H(+). NTP-dependent helicase that catalyzes unidirectional unwinding of 3'tailed duplex RNAs and plays an important role during transcription of early mRNAs, presumably by preventing R-loop formation behind the elongating RNA polymerase. Might also play a role in the export of newly synthesized mRNA chains out of the core into the cytoplasm. Required for replication and propagation of viral particles. In Vaccinia virus (strain Ankara) (VACV), this protein is RNA helicase NPH-II (OPG084).